The primary structure comprises 330 residues: Aspartate--ammonia ligase (330 aa).

The protein belongs to the class-II aminoacyl-tRNA synthetase family. AsnA subfamily.

The protein resides in the cytoplasm. It catalyses the reaction L-aspartate + NH4(+) + ATP = L-asparagine + AMP + diphosphate + H(+). Its pathway is amino-acid biosynthesis; L-asparagine biosynthesis; L-asparagine from L-aspartate (ammonia route): step 1/1. The protein is Aspartate--ammonia ligase of Haemophilus ducreyi (strain 35000HP / ATCC 700724).